The following is a 521-amino-acid chain: Bifunctional purine biosynthesis protein PurH (521 aa).

The region spanning 1–145 (MIKQALISVS…KNHRDVTVVV (145 aa)) is the MGS-like domain.

It belongs to the PurH family.

It carries out the reaction (6R)-10-formyltetrahydrofolate + 5-amino-1-(5-phospho-beta-D-ribosyl)imidazole-4-carboxamide = 5-formamido-1-(5-phospho-D-ribosyl)imidazole-4-carboxamide + (6S)-5,6,7,8-tetrahydrofolate. The catalysed reaction is IMP + H2O = 5-formamido-1-(5-phospho-D-ribosyl)imidazole-4-carboxamide. It functions in the pathway purine metabolism; IMP biosynthesis via de novo pathway; 5-formamido-1-(5-phospho-D-ribosyl)imidazole-4-carboxamide from 5-amino-1-(5-phospho-D-ribosyl)imidazole-4-carboxamide (10-formyl THF route): step 1/1. The protein operates within purine metabolism; IMP biosynthesis via de novo pathway; IMP from 5-formamido-1-(5-phospho-D-ribosyl)imidazole-4-carboxamide: step 1/1. The polypeptide is Bifunctional purine biosynthesis protein PurH (Burkholderia thailandensis (strain ATCC 700388 / DSM 13276 / CCUG 48851 / CIP 106301 / E264)).